Consider the following 591-residue polypeptide: MHAYRSHSCAALTAANVGETIRLSGWVHRRRDHGGVIFIDLRDHFGITQILCDPDSPVFAEVEKLRAEFCIRIDGEVKARAPELVNEKLPTGEIEVYIRDMEVLGAAGELPLQVFGDQEYPEETRLKYRYLDLRREKMQTNMMLRSDVVASIRKRMWDKQFREYQTPIITASSPEGARDFLVPSRQHPGKFYALPQAPQQFKQLLMVSGFDKYFQIAPCFRDEDPRADRSPTDFYQLDLEMSFVEQQDVFDTIEPVLRGVFEEFGDGATVDQQWPLISYADAALWYGTDKPDLRNPIKMQIVSEHFAGSGFAIFAKLLEQEGTQVRAIPAPKGGSRKFCDRMNKFAQEQGLPGMGYIFWRDQGEGMEAAGPLAKNIGPERTEAIRQQLDLGVGDAAFFLAGKPSQFEAVAGRARSVIGDELGLTEQNRFAFAWIVDFPMFEADEETGKIDFSHNPFSMPQGGLAALDGDPLSVLGYQYDLACNGYELVSGAIRNHQPEIMFKAFEVAGYGADEVRKRFGGMVNAFQYGAPPHGGCAAGIDRIVMLLADTANIREVILFPMNQRAEDLMMNAPSEPMPDQLMELGLRVLPQD.

Glu175 is a binding site for L-aspartate. An aspartate region spans residues 199–202; sequence QQFK. L-aspartate contacts are provided by Arg221 and His453. Residue 221–223 coordinates ATP; the sequence is RDE. Glu486 is a binding site for ATP. Arg493 contributes to the L-aspartate binding site. Residue 538-541 participates in ATP binding; it reads GIDR.

It belongs to the class-II aminoacyl-tRNA synthetase family. Type 1 subfamily. As to quaternary structure, homodimer.

It is found in the cytoplasm. The catalysed reaction is tRNA(Asx) + L-aspartate + ATP = L-aspartyl-tRNA(Asx) + AMP + diphosphate. Its function is as follows. Aspartyl-tRNA synthetase with relaxed tRNA specificity since it is able to aspartylate not only its cognate tRNA(Asp) but also tRNA(Asn). Reaction proceeds in two steps: L-aspartate is first activated by ATP to form Asp-AMP and then transferred to the acceptor end of tRNA(Asp/Asn). The polypeptide is Aspartate--tRNA(Asp/Asn) ligase (Jannaschia sp. (strain CCS1)).